A 111-amino-acid chain; its full sequence is C-type lectin lectoxin-Enh2 (111 aa).

The signal sequence occupies residues methionine 1–glycine 23. Cysteine 26 and cysteine 37 are joined by a disulfide. The region spanning arginine 33 to glutamine 108 is the C-type lectin domain. Residues glutamate 72 to asparagine 74 carry the Mannose-binding motif. Residues glutamate 80, asparagine 95, and aspartate 96 each contribute to the Ca(2+) site. Cysteines 82 and 99 form a disulfide.

It belongs to the true venom lectin family. As to expression, expressed by the venom gland.

It localises to the secreted. Its function is as follows. Mannose-binding lectin which recognizes specific carbohydrate structures and agglutinates a variety of animal cells by binding to cell-surface glycoproteins and glycolipids. May be a calcium-dependent lectin. The chain is C-type lectin lectoxin-Enh2 from Pseudoferania polylepis (Macleay's water snake).